A 155-amino-acid chain; its full sequence is Ribosome maturation factor RimP (155 aa).

The protein belongs to the RimP family.

Its subcellular location is the cytoplasm. Functionally, required for maturation of 30S ribosomal subunits. The protein is Ribosome maturation factor RimP of Parasynechococcus marenigrum (strain WH8102).